Consider the following 134-residue polypeptide: Ribosome-binding factor A (134 aa).

It belongs to the RbfA family. As to quaternary structure, monomer. Binds 30S ribosomal subunits, but not 50S ribosomal subunits or 70S ribosomes.

Its subcellular location is the cytoplasm. Functionally, one of several proteins that assist in the late maturation steps of the functional core of the 30S ribosomal subunit. Associates with free 30S ribosomal subunits (but not with 30S subunits that are part of 70S ribosomes or polysomes). Required for efficient processing of 16S rRNA. May interact with the 5'-terminal helix region of 16S rRNA. This Baumannia cicadellinicola subsp. Homalodisca coagulata protein is Ribosome-binding factor A.